The following is a 222-amino-acid chain: Large ribosomal subunit protein uL1 (222 aa).

The protein belongs to the universal ribosomal protein uL1 family. As to quaternary structure, part of the 50S ribosomal subunit.

Its function is as follows. Binds directly to 23S rRNA. Probably involved in E site tRNA release. Protein L1 is also a translational repressor protein, it controls the translation of its operon by binding to its mRNA. This Pyrobaculum arsenaticum (strain DSM 13514 / JCM 11321 / PZ6) protein is Large ribosomal subunit protein uL1.